The primary structure comprises 89 residues: UPF0367 protein CYA_1023 (89 aa).

The disordered stretch occupies residues 69–89 (TKSGGPGAPGTRPGFLAQLQG).

It belongs to the UPF0367 family.

This chain is UPF0367 protein CYA_1023, found in Synechococcus sp. (strain JA-3-3Ab) (Cyanobacteria bacterium Yellowstone A-Prime).